A 154-amino-acid polypeptide reads, in one-letter code: Myoglobin (154 aa).

Residues 2–148 (GLSDGEWQLV…FRNDIAAKYK (147 aa)) enclose the Globin domain. At S4 the chain carries Phosphoserine. Position 65 (H65) interacts with nitrite. H65 provides a ligand contact to O2. T68 carries the post-translational modification Phosphothreonine. H94 serves as a coordination point for heme b.

It belongs to the globin family. Monomeric.

It localises to the cytoplasm. Its subcellular location is the sarcoplasm. The catalysed reaction is Fe(III)-heme b-[protein] + nitric oxide + H2O = Fe(II)-heme b-[protein] + nitrite + 2 H(+). It carries out the reaction H2O2 + AH2 = A + 2 H2O. In terms of biological role, monomeric heme protein which primary function is to store oxygen and facilitate its diffusion within muscle tissues. Reversibly binds oxygen through a pentacoordinated heme iron and enables its timely and efficient release as needed during periods of heightened demand. Depending on the oxidative conditions of tissues and cells, and in addition to its ability to bind oxygen, it also has a nitrite reductase activity whereby it regulates the production of bioactive nitric oxide. Under stress conditions, like hypoxia and anoxia, it also protects cells against reactive oxygen species thanks to its pseudoperoxidase activity. The polypeptide is Myoglobin (MB) (Vulpes chama (Cape fox)).